Consider the following 382-residue polypeptide: Gap junction alpha-1 protein (382 aa).

Topologically, residues G2–K23 are cytoplasmic. S5 carries the post-translational modification Phosphoserine. The chain crosses the membrane as a helical span at residues V24–A44. Residues W45–R76 are Extracellular-facing. 2 cysteine pairs are disulfide-bonded: C54–C192 and C187–C198. Residues F77–F97 form a helical membrane-spanning segment. The Cytoplasmic segment spans residues Y98–Y155. A Glycyl lysine isopeptide (Lys-Gly) (interchain with G-Cter in SUMO) cross-link involves residue K144. A helical transmembrane segment spans residues I156–I176. At Y177–T207 the chain is on the extracellular side. Residues I208 to L228 traverse the membrane as a helical segment. At F229 to I382 the chain is on the cytoplasmic side. K237 participates in a covalent cross-link: Glycyl lysine isopeptide (Lys-Gly) (interchain with G-Cter in SUMO). The interaction with NOV stretch occupies residues S244 to I382. Position 247 is a phosphotyrosine (Y247). S255 and S262 each carry phosphoserine. Residues K264–I382 are interaction with UBQLN4. An S-nitrosocysteine modification is found at C271. Phosphothreonine is present on T275. Phosphoserine is present on residues S306 and S314. The span at Q317–A332 shows a compositional bias: polar residues. The disordered stretch occupies residues Q317–I382. A Phosphoserine; by CK1 modification is found at S325. Position 326 is a phosphothreonine (T326). 2 positions are modified to phosphoserine; by CK1: S328 and S330. S344 and S365 each carry phosphoserine. The span at R362–R374 shows a compositional bias: low complexity. The residue at position 368 (S368) is a Phosphoserine; by PKC/PRKCG and PKC/PRKCD. Residues S369 and S373 each carry the phosphoserine modification.

It belongs to the connexin family. Alpha-type (group II) subfamily. A connexon is composed of a hexamer of connexins. Interacts (via C-terminus) with TJP1. Interacts (via C-terminus) with SRC (via SH3 domain). Interacts (not ubiquitinated) with UBQLN4 (via UBA domain). Interacts with SGSM3 and CNST. Interacts with RIC1/CIP150. Interacts with CSNK1D. Interacts with NOV. Interacts with TMEM65. Interacts with ANK3/ANKG and PKP2. In terms of processing, phosphorylated at Ser-368 by PRKCG; phosphorylation induces disassembly of gap junction plaques and inhibition of gap junction activity. Phosphorylation at Ser-325, Ser-328 and Ser-330 by CK1 modulates gap junction assembly. Phosphorylation at Ser-368 by PRKCD triggers its internalization into small vesicles leading to proteasome-mediated degradation. Post-translationally, sumoylated with SUMO1, SUMO2 and SUMO3, which may regulate the level of functional Cx43 gap junctions at the plasma membrane. May be desumoylated by SENP1 or SENP2. S-nitrosylation at Cys-271 is enriched at the muscle endothelial gap junction in arteries, it augments channel permeability and may regulate of smooth muscle cell to endothelial cell communication. In terms of processing, acetylated in the developing cortex; leading to delocalization from the cell membrane. As to expression, expressed at intercalated disks in the heart (at protein level). Expressed in the fetal cochlea.

The protein resides in the cell membrane. It is found in the cell junction. Its subcellular location is the gap junction. It localises to the endoplasmic reticulum. Its function is as follows. Gap junction protein that acts as a regulator of bladder capacity. A gap junction consists of a cluster of closely packed pairs of transmembrane channels, the connexons, through which materials of low MW diffuse from one cell to a neighboring cell. May play a critical role in the physiology of hearing by participating in the recycling of potassium to the cochlear endolymph. Negative regulator of bladder functional capacity: acts by enhancing intercellular electrical and chemical transmission, thus sensitizing bladder muscles to cholinergic neural stimuli and causing them to contract. May play a role in cell growth inhibition through the regulation of NOV expression and localization. Plays an essential role in gap junction communication in the ventricles. This Homo sapiens (Human) protein is Gap junction alpha-1 protein (GJA1).